The sequence spans 561 residues: DNA ligase B (561 aa).

Lysine 125 serves as the catalytic N6-AMP-lysine intermediate.

It belongs to the NAD-dependent DNA ligase family. LigB subfamily.

The enzyme catalyses NAD(+) + (deoxyribonucleotide)n-3'-hydroxyl + 5'-phospho-(deoxyribonucleotide)m = (deoxyribonucleotide)n+m + AMP + beta-nicotinamide D-nucleotide.. In terms of biological role, catalyzes the formation of phosphodiester linkages between 5'-phosphoryl and 3'-hydroxyl groups in double-stranded DNA using NAD as a coenzyme and as the energy source for the reaction. The protein is DNA ligase B of Salmonella gallinarum (strain 287/91 / NCTC 13346).